A 178-amino-acid polypeptide reads, in one-letter code: ATP-dependent protease subunit HslV (178 aa).

The active site involves T7. Residues G162, C165, and T168 each contribute to the Na(+) site.

Belongs to the peptidase T1B family. HslV subfamily. A double ring-shaped homohexamer of HslV is capped on each side by a ring-shaped HslU homohexamer. The assembly of the HslU/HslV complex is dependent on binding of ATP.

It localises to the cytoplasm. The enzyme catalyses ATP-dependent cleavage of peptide bonds with broad specificity.. Its activity is regulated as follows. Allosterically activated by HslU binding. Its function is as follows. Protease subunit of a proteasome-like degradation complex believed to be a general protein degrading machinery. In Paraburkholderia xenovorans (strain LB400), this protein is ATP-dependent protease subunit HslV.